We begin with the raw amino-acid sequence, 343 residues long: Trace amine-associated receptor 3 (343 aa).

At 1 to 35 (MDLIYIPEDLSSCPKFGNKSCPPTNRSFRVRMIMY) the chain is on the extracellular side. 2 N-linked (GlcNAc...) asparagine glycosylation sites follow: Asn18 and Asn25. 2 cysteine pairs are disulfide-bonded: Cys21–Cys185 and Cys104–Cys189. Residues 36 to 56 (LFMTGAMVITIFGNLVIIISI) form a helical membrane-spanning segment. Residues 57 to 68 (SHFKQLHSPTNF) lie on the Cytoplasmic side of the membrane. The chain crosses the membrane as a helical span at residues 69–89 (LILSMATTDFLLGFVIMPYSM). Over 90-150 (VRSVESCWYF…TTMTVSMIKR (61 aa)) the chain is Extracellular. A helical transmembrane segment spans residues 151 to 168 (LLAFCWAAPALFSFGLVL). The Cytoplasmic portion of the chain corresponds to 169–172 (SEAN). The tract at residues 173 to 186 (VSGMQSYEILVACF) is extracellular Loop 2 (ECL2). A helical transmembrane segment spans residues 173–193 (VSGMQSYEILVACFNFCALTF). Over 194-198 (NKFWG) the chain is Extracellular. Residues 199-223 (TILFTTCFFTPGSIMVGIYGKIFIV) form a helical membrane-spanning segment. Over 224-257 (SRRHARALSDMPANTKGAVGKNLSKKKDRKAAKT) the chain is Cytoplasmic. A helical membrane pass occupies residues 258-278 (LGIVMGVFLACWLPCFLAVLI). Residues 279–287 (DPYLDYSTP) lie on the Extracellular side of the membrane. The chain crosses the membrane as a helical span at residues 288–308 (IIVLDLLVWLGYFNSTCNPLI). Topologically, residues 309-343 (HGFFYPWFRKALQFIVSGKIFRSNSDTANLFPEAH) are cytoplasmic.

Belongs to the G-protein coupled receptor 1 family. Specifically expressed in neurons of the olfactory epithelium.

The protein resides in the cell membrane. Olfactory receptor activated by several primary trace amines, including isoamylamine. Activated by isoamylamine and cyclohexylamine, but not to the corresponding alcohols, isoamylalcohol and cyclohexanol. This receptor is probably mediated by the G(s)-class of G-proteins which activate adenylate cyclase. This chain is Trace amine-associated receptor 3, found in Mus musculus (Mouse).